Here is a 344-residue protein sequence, read N- to C-terminus: tRNA N6-adenosine threonylcarbamoyltransferase (344 aa).

Fe cation-binding residues include His111 and His115. Substrate is bound by residues 133-137 (LVSGG), Asp166, Gly179, and Asn283. Asp311 serves as a coordination point for Fe cation.

Belongs to the KAE1 / TsaD family. Requires Fe(2+) as cofactor.

It is found in the cytoplasm. It catalyses the reaction L-threonylcarbamoyladenylate + adenosine(37) in tRNA = N(6)-L-threonylcarbamoyladenosine(37) in tRNA + AMP + H(+). Required for the formation of a threonylcarbamoyl group on adenosine at position 37 (t(6)A37) in tRNAs that read codons beginning with adenine. Is involved in the transfer of the threonylcarbamoyl moiety of threonylcarbamoyl-AMP (TC-AMP) to the N6 group of A37, together with TsaE and TsaB. TsaD likely plays a direct catalytic role in this reaction. This Orientia tsutsugamushi (strain Ikeda) (Rickettsia tsutsugamushi) protein is tRNA N6-adenosine threonylcarbamoyltransferase.